The chain runs to 154 residues: Putative thioredoxin H10 (154 aa).

One can recognise a Thioredoxin domain in the interval 24–148 (NNNNSYGQTR…LQKKTAAAAD (125 aa)). Active-site nucleophile residues include cysteine 74 and cysteine 77. Residues cysteine 74 and cysteine 77 are joined by a disulfide bond.

The protein belongs to the thioredoxin family.

It localises to the cytoplasm. In terms of biological role, probable thiol-disulfide oxidoreductase that may be involved in the redox regulation of a number of cytosolic enzymes. The protein is Putative thioredoxin H10 of Arabidopsis thaliana (Mouse-ear cress).